A 281-amino-acid chain; its full sequence is Nhr-229 coiled coil domain containing nccd-1 (281 aa).

This Caenorhabditis elegans protein is Nhr-229 coiled coil domain containing nccd-1.